The sequence spans 215 residues: Probable GTP-binding protein EngB (215 aa).

Residues 31 to 215 enclose the EngB-type G domain; it reads GPPEIAFAGR…RAAILQAIAV (185 aa). Residues 39–46, 66–70, 93–96, 160–163, and 194–196 contribute to the GTP site; these read GRSNVGKS, GRTQE, DMPG, TKSD, and TSS. Residues Ser46 and Thr68 each contribute to the Mg(2+) site.

The protein belongs to the TRAFAC class TrmE-Era-EngA-EngB-Septin-like GTPase superfamily. EngB GTPase family. It depends on Mg(2+) as a cofactor.

In terms of biological role, necessary for normal cell division and for the maintenance of normal septation. The polypeptide is Probable GTP-binding protein EngB (Bartonella quintana (strain Toulouse) (Rochalimaea quintana)).